Here is a 160-residue protein sequence, read N- to C-terminus: MD-2-related lipid-recognition protein ROSY1 (160 aa).

A signal peptide spans M1–C23.

In terms of assembly, interacts with SYT1. Expressed exclusively in roots, in epidermis and cortex cells of the root elongation zone, and lateral root cap cells at the root tip.

The protein resides in the cytoplasm. Its function is as follows. Involved in the regulation of gravitropic response and basipetal auxin transport in roots. Involved in salt stress tolerance. May facilitate membrane trafficking and asymmetric cell elongation via SYT1. Binds stigmasterol and dipalmitoyl phosphoethanolamine (DPPE) in vitro. This Arabidopsis thaliana (Mouse-ear cress) protein is MD-2-related lipid-recognition protein ROSY1.